Consider the following 342-residue polypeptide: Phosphate acyltransferase (342 aa).

This sequence belongs to the PlsX family. In terms of assembly, homodimer. Probably interacts with PlsY.

The protein localises to the cytoplasm. It catalyses the reaction a fatty acyl-[ACP] + phosphate = an acyl phosphate + holo-[ACP]. It participates in lipid metabolism; phospholipid metabolism. Catalyzes the reversible formation of acyl-phosphate (acyl-PO(4)) from acyl-[acyl-carrier-protein] (acyl-ACP). This enzyme utilizes acyl-ACP as fatty acyl donor, but not acyl-CoA. In Shewanella loihica (strain ATCC BAA-1088 / PV-4), this protein is Phosphate acyltransferase.